The primary structure comprises 896 residues: Echinoderm microtubule-associated protein-like 3 (896 aa).

An N-acetylmethionine modification is found at Met1. A coiled-coil region spans residues Leu16–Leu43. The tract at residues Pro50–Tyr209 is disordered. A compositionally biased stretch (polar residues) spans Thr77–Glu88. Residues Pro134–Pro145 are compositionally biased toward pro residues. Low complexity predominate over residues Arg154 to Ser163. Residues Ala174 to Ser189 show a composition bias toward polar residues. Phosphoserine is present on residues Ser176, Ser198, and Ser204. 13 WD repeats span residues Arg234–Pro286, Gly295–Ser344, Leu350–Cys392, Leu398–Trp434, Arg448–Arg487, Tyr504–Pro543, Gln549–Asp584, Phe589–Gly626, His629–Thr667, Ser674–Val709, Ser716–Val755, Arg765–Tyr823, and Ala830–Val869. The disordered stretch occupies residues Gly876–Val896. Residues Pro877 to Val896 show a composition bias toward low complexity. Phosphothreonine; by CDK1 is present on Thr881. Ser883 is subject to Phosphoserine.

This sequence belongs to the WD repeat EMAP family. Homotrimer; self-association is mediated by the N-terminal coiled coil. Interacts with EML2 but not with EML1. Interacts (phosphorylated at Thr-881) with TUBG1, HAUS1, HAUS2, HAUS3, HAUS4, HAUS5, HAUS6, HAUS7 and HAUS8. Phosphorylation at Thr-881 during mitosis is required for interaction with TUBG1, HAUS1, HAUS2, HAUS3, HAUS4, HAUS5, HAUS6, HAUS7 and HAUS8 and their recruitment to spindle microtubules.

It is found in the cytoplasm. Its subcellular location is the cytoskeleton. The protein localises to the nucleus. It localises to the midbody. The protein resides in the spindle. Its function is as follows. Regulates mitotic spindle assembly, microtubule (MT)-kinetochore attachment and chromosome separation via recruitment of HAUS augmin-like complex and TUBG1 to the existing MTs and promoting MT-based MT nucleation. Required for proper alignnment of chromosomes during metaphase. In Homo sapiens (Human), this protein is Echinoderm microtubule-associated protein-like 3 (EML3).